Consider the following 90-residue polypeptide: RNA-binding protein Hfq (90 aa).

Positions Asp10–Leu70 constitute a Sm domain.

Belongs to the Hfq family. Homohexamer.

In terms of biological role, RNA chaperone that binds small regulatory RNA (sRNAs) and mRNAs to facilitate mRNA translational regulation in response to envelope stress, environmental stress and changes in metabolite concentrations. Also binds with high specificity to tRNAs. In Symbiobacterium thermophilum (strain DSM 24528 / JCM 14929 / IAM 14863 / T), this protein is RNA-binding protein Hfq.